A 22-amino-acid chain; its full sequence is Conotoxin MIIIJ (22 aa).

The residue at position 1 (Gln1) is a Pyrrolidone carboxylic acid. Cystine bridges form between Cys3–Cys21, Cys4–Cys19, and Cys9–Cys22.

Belongs to the conotoxin M superfamily. Expressed by the venom duct.

It is found in the secreted. Its function is as follows. Probable competitive antagonist of fish muscle acetylcholine receptor. Inhibits postsynaptic nicotinic acetylcholine receptors (nAChRs) from fish (zebrafish and goldfish) and frogs (IC(50)=0.1 uM). Protects these receptors from block by alpha-bungarotoxin and alpha-conotoxin EI. Does not block nAChRs at the neuromuscular junction of Rana pipiens. Shows a weak inhibition on mammalian adult and fetal muscle nAChRs (alpha-1-beta-1-delta-epsilon/CHRNA1-CHRNB1-CHRND-CHRNE and alpha-1 beta-1 gamma delta/CHRNA1-CHRNB1-CHRNG-CHRND) (IC(50)=3-45 uM). In vivo, induces paralysis in goldfish (Carassius auratus) but not mice. This chain is Conotoxin MIIIJ, found in Conus magus (Magical cone).